A 163-amino-acid chain; its full sequence is UPF0262 protein RPA4530 (163 aa).

Belongs to the UPF0262 family.

The chain is UPF0262 protein RPA4530 from Rhodopseudomonas palustris (strain ATCC BAA-98 / CGA009).